Reading from the N-terminus, the 413-residue chain is Phosphopentomutase (413 aa).

Mn(2+)-binding residues include aspartate 11, aspartate 306, histidine 311, aspartate 347, histidine 348, and histidine 359.

The protein belongs to the phosphopentomutase family. Mn(2+) is required as a cofactor.

It is found in the cytoplasm. It catalyses the reaction 2-deoxy-alpha-D-ribose 1-phosphate = 2-deoxy-D-ribose 5-phosphate. It carries out the reaction alpha-D-ribose 1-phosphate = D-ribose 5-phosphate. Its pathway is carbohydrate degradation; 2-deoxy-D-ribose 1-phosphate degradation; D-glyceraldehyde 3-phosphate and acetaldehyde from 2-deoxy-alpha-D-ribose 1-phosphate: step 1/2. In terms of biological role, isomerase that catalyzes the conversion of deoxy-ribose 1-phosphate (dRib-1-P) and ribose 1-phosphate (Rib-1-P) to deoxy-ribose 5-phosphate (dRib-5-P) and ribose 5-phosphate (Rib-5-P), respectively. The protein is Phosphopentomutase of Helicobacter pylori (strain J99 / ATCC 700824) (Campylobacter pylori J99).